The following is an 84-amino-acid chain: Exodeoxyribonuclease 7 small subunit (84 aa).

This sequence belongs to the XseB family. In terms of assembly, heterooligomer composed of large and small subunits.

The protein localises to the cytoplasm. It carries out the reaction Exonucleolytic cleavage in either 5'- to 3'- or 3'- to 5'-direction to yield nucleoside 5'-phosphates.. Its function is as follows. Bidirectionally degrades single-stranded DNA into large acid-insoluble oligonucleotides, which are then degraded further into small acid-soluble oligonucleotides. This is Exodeoxyribonuclease 7 small subunit from Azoarcus sp. (strain BH72).